Reading from the N-terminus, the 80-residue chain is Large ribosomal subunit protein uL24 (80 aa).

Belongs to the universal ribosomal protein uL24 family. In terms of assembly, part of the 50S ribosomal subunit.

In terms of biological role, one of two assembly initiator proteins, it binds directly to the 5'-end of the 23S rRNA, where it nucleates assembly of the 50S subunit. One of the proteins that surrounds the polypeptide exit tunnel on the outside of the subunit. This is Large ribosomal subunit protein uL24 from Chlorobaculum parvum (strain DSM 263 / NCIMB 8327) (Chlorobium vibrioforme subsp. thiosulfatophilum).